A 402-amino-acid polypeptide reads, in one-letter code: 1-deoxy-D-xylulose 5-phosphate reductoisomerase (402 aa).

Residues Thr25, Gly26, Ser27, Val28, Arg52, Asn53, and Asn136 each contribute to the NADPH site. Lys137 lines the 1-deoxy-D-xylulose 5-phosphate pocket. Residue Glu138 participates in NADPH binding. Asp162 contacts Mn(2+). Residues Ser163, Glu164, Ser188, and His211 each contribute to the 1-deoxy-D-xylulose 5-phosphate site. A Mn(2+)-binding site is contributed by Glu164. Residue Gly217 coordinates NADPH. The 1-deoxy-D-xylulose 5-phosphate site is built by Ser224, Asn229, Lys230, and Glu233. Glu233 contacts Mn(2+).

Belongs to the DXR family. Mg(2+) serves as cofactor. It depends on Mn(2+) as a cofactor.

The enzyme catalyses 2-C-methyl-D-erythritol 4-phosphate + NADP(+) = 1-deoxy-D-xylulose 5-phosphate + NADPH + H(+). It functions in the pathway isoprenoid biosynthesis; isopentenyl diphosphate biosynthesis via DXP pathway; isopentenyl diphosphate from 1-deoxy-D-xylulose 5-phosphate: step 1/6. Catalyzes the NADPH-dependent rearrangement and reduction of 1-deoxy-D-xylulose-5-phosphate (DXP) to 2-C-methyl-D-erythritol 4-phosphate (MEP). In Rhodospirillum centenum (strain ATCC 51521 / SW), this protein is 1-deoxy-D-xylulose 5-phosphate reductoisomerase.